Here is a 362-residue protein sequence, read N- to C-terminus: uncharacterized protein (362 aa).

A2 is modified (N-acetylalanine).

This sequence belongs to the Gfo/Idh/MocA family. Homodimer.

This is an uncharacterized protein from Arabidopsis thaliana (Mouse-ear cress).